A 156-amino-acid chain; its full sequence is Small ribosomal subunit protein uS7 (156 aa).

It belongs to the universal ribosomal protein uS7 family. In terms of assembly, part of the 30S ribosomal subunit. Contacts proteins S9 and S11.

Functionally, one of the primary rRNA binding proteins, it binds directly to 16S rRNA where it nucleates assembly of the head domain of the 30S subunit. Is located at the subunit interface close to the decoding center, probably blocks exit of the E-site tRNA. This is Small ribosomal subunit protein uS7 from Shewanella amazonensis (strain ATCC BAA-1098 / SB2B).